We begin with the raw amino-acid sequence, 274 residues long: MQFSKMHGLGNDFMVIDGVTQNVYLTEDMIRKLADRHYGVGFDQLLLVEPPYDPELDFHYRIFNADGSEVAQCGNGARCFARFVSLKGLINRSDMYVSTAKGKMVLTLVDEENVRVNMGEPIWEPAKIPFIANKFEKNYILRTDLQTVLCGVVSMGNPHCVLQVDDIEQATVHQLGALLEKHHRFPERANVGFMQIIDRHHIKLRVFERGVGETKACGSGACAAVAVGIMQGVLDANVQVSLPGGTLQIEWQGKGKPLYMTGTATHIYDGFIKL.

The substrate site is built by Asn-11, Gln-44, and Asn-64. Cys-73 (proton donor) is an active-site residue. Residues 74-75 (GN), Asn-157, Asn-190, and 208-209 (ER) contribute to the substrate site. Cys-217 serves as the catalytic Proton acceptor. 218–219 (GS) lines the substrate pocket.

The protein belongs to the diaminopimelate epimerase family. In terms of assembly, homodimer.

The protein resides in the cytoplasm. The enzyme catalyses (2S,6S)-2,6-diaminopimelate = meso-2,6-diaminopimelate. It participates in amino-acid biosynthesis; L-lysine biosynthesis via DAP pathway; DL-2,6-diaminopimelate from LL-2,6-diaminopimelate: step 1/1. Functionally, catalyzes the stereoinversion of LL-2,6-diaminopimelate (L,L-DAP) to meso-diaminopimelate (meso-DAP), a precursor of L-lysine and an essential component of the bacterial peptidoglycan. The chain is Diaminopimelate epimerase from Haemophilus ducreyi (strain 35000HP / ATCC 700724).